The primary structure comprises 137 residues: MLSLNQEVHGPKTSEVYGFVGSISIVVATVIFLIWGYVPDKFLESIGIYYYPSKYWAMAMPMYSMVTLLVALVFYIGLNFMSTSKPTSLNTLFDDYSREDVNFLPLMKNGEDRPIDPISDIDITRINDLMFDSHLAK.

Helical transmembrane passes span 16–36 (VYGF…LIWG) and 58–78 (MAMP…YIGL).

It belongs to the PIGP family.

The protein localises to the membrane. It catalyses the reaction a 1,2-diacyl-sn-glycero-3-phospho-(1D-myo-inositol) + UDP-N-acetyl-alpha-D-glucosamine = a 6-(N-acetyl-alpha-D-glucosaminyl)-1-(1,2-diacyl-sn-glycero-3-phospho)-1D-myo-inositol + UDP + H(+). It participates in glycolipid biosynthesis; glycosylphosphatidylinositol-anchor biosynthesis. Its function is as follows. Part of the complex catalyzing the transfer of N-acetylglucosamine from UDP-N-acetylglucosamine to phosphatidylinositol, the first step of GPI biosynthesis. This is Phosphatidylinositol N-acetylglucosaminyltransferase subunit P from Arabidopsis thaliana (Mouse-ear cress).